Here is a 118-residue protein sequence, read N- to C-terminus: Large ribosomal subunit protein bL20 (118 aa).

This sequence belongs to the bacterial ribosomal protein bL20 family.

In terms of biological role, binds directly to 23S ribosomal RNA and is necessary for the in vitro assembly process of the 50S ribosomal subunit. It is not involved in the protein synthesizing functions of that subunit. The chain is Large ribosomal subunit protein bL20 from Psychromonas ingrahamii (strain DSM 17664 / CCUG 51855 / 37).